The primary structure comprises 339 residues: Lipopolysaccharide 1,2-glucosyltransferase (339 aa).

UDP-binding positions include 35-40 (GIDENY) and 132-133 (DA). 2 residues coordinate Mg(2+): aspartate 132 and aspartate 134. 2 short sequence motifs (DXD) span residues 132-134 (DAD) and 219-221 (DQD). Residue histidine 268 participates in Mg(2+) binding. 268–274 (HYTGITK) contributes to the UDP binding site.

It belongs to the glycosyltransferase 8 family. Mg(2+) serves as cofactor.

The protein resides in the cell inner membrane. It carries out the reaction UDP-glucose + [lipopolysaccharide] = UDP + D-glucosyl-[lipopolysaccharide].. Its pathway is bacterial outer membrane biogenesis; LPS core biosynthesis. In terms of biological role, glucosyltransferase involved in the biosynthesis of the core oligosaccharide region of lipopolysaccharide (LPS). Catalyzes the addition of a glucose (glucose II) to the outer-core galactose I. Has a marked preference for its specific donor substrate, but it appears to have a relaxed specificity for alternate LPS acceptor residues, providing the overall size of the acceptor is conserved. The sequence is that of Lipopolysaccharide 1,2-glucosyltransferase from Escherichia coli.